We begin with the raw amino-acid sequence, 303 residues long: DnaJ homolog subfamily C member 17 (303 aa).

The region spanning 11–76 is the J domain; sequence DLYALLGIEE…AARAAYDKVR (66 aa). Composition is skewed to basic and acidic residues over residues 78–106 and 150–166; these read ARKQ…RERQ and IRQD…ENTE. 2 disordered regions span residues 78–124 and 150–170; these read ARKQ…TTTL and IRQD…GKGT. In terms of domain architecture, RRM spans 178 to 249; it reads KCKKEDESQG…NPLKVSWLEG (72 aa). Position 264 is an N6-methyllysine (lysine 264).

It localises to the cytoplasm. Its subcellular location is the nucleus. In terms of biological role, may negatively affect PAX8-induced thyroglobulin/TG transcription. The sequence is that of DnaJ homolog subfamily C member 17 (Dnajc17) from Rattus norvegicus (Rat).